The chain runs to 308 residues: Aspartate carbamoyltransferase catalytic subunit (308 aa).

Carbamoyl phosphate contacts are provided by R57 and T58. K86 is an L-aspartate binding site. Carbamoyl phosphate-binding residues include R107, H135, and Q138. L-aspartate contacts are provided by R168 and R229. The carbamoyl phosphate site is built by L268 and P269.

The protein belongs to the aspartate/ornithine carbamoyltransferase superfamily. ATCase family. As to quaternary structure, heterooligomer of catalytic and regulatory chains.

It carries out the reaction carbamoyl phosphate + L-aspartate = N-carbamoyl-L-aspartate + phosphate + H(+). It participates in pyrimidine metabolism; UMP biosynthesis via de novo pathway; (S)-dihydroorotate from bicarbonate: step 2/3. In terms of biological role, catalyzes the condensation of carbamoyl phosphate and aspartate to form carbamoyl aspartate and inorganic phosphate, the committed step in the de novo pyrimidine nucleotide biosynthesis pathway. The protein is Aspartate carbamoyltransferase catalytic subunit of Pyrococcus abyssi (strain GE5 / Orsay).